The following is a 336-amino-acid chain: Probable allantoicase (336 aa).

The protein belongs to the allantoicase family.

It catalyses the reaction allantoate + H2O = (S)-ureidoglycolate + urea. It functions in the pathway nitrogen metabolism; (S)-allantoin degradation; (S)-ureidoglycolate from allantoate (aminidohydrolase route): step 1/1. The protein is Probable allantoicase of Acinetobacter baumannii (strain SDF).